A 794-amino-acid chain; its full sequence is DNA ligase (794 aa).

Residues 35 to 39 (DAEYD), 84 to 85 (SL), and glutamate 126 each bind NAD(+). The active-site N6-AMP-lysine intermediate is the lysine 128. Residues arginine 149, glutamate 186, lysine 302, and lysine 326 each contribute to the NAD(+) site. The Zn(2+) site is built by cysteine 420, cysteine 423, cysteine 450, and cysteine 456. In terms of domain architecture, BRCT spans 711–794 (VEGLPLAGQT…KLFDEHGVAR (84 aa)).

The protein belongs to the NAD-dependent DNA ligase family. LigA subfamily. Mg(2+) serves as cofactor. Requires Mn(2+) as cofactor.

It catalyses the reaction NAD(+) + (deoxyribonucleotide)n-3'-hydroxyl + 5'-phospho-(deoxyribonucleotide)m = (deoxyribonucleotide)n+m + AMP + beta-nicotinamide D-nucleotide.. Functionally, DNA ligase that catalyzes the formation of phosphodiester linkages between 5'-phosphoryl and 3'-hydroxyl groups in double-stranded DNA using NAD as a coenzyme and as the energy source for the reaction. It is essential for DNA replication and repair of damaged DNA. This chain is DNA ligase, found in Pseudomonas aeruginosa (strain UCBPP-PA14).